The following is a 276-amino-acid chain: D-apionate oxidoisomerase (276 aa).

NAD(+) is bound by residues 12–14 (GKM), Glu-33, and Asp-69. Zn(2+) is bound by residues His-114 and Glu-184.

The protein belongs to the ApnO family. Zn(2+) is required as a cofactor.

It carries out the reaction D-apionate + NAD(+) = 3-oxoisoapionate + NADH + H(+). The protein operates within carbohydrate metabolism. Its function is as follows. Involved in catabolism of D-apiose. Catalyzes the conversion of D-apionate to 3-oxo-isoapionate. This chain is D-apionate oxidoisomerase, found in Cupriavidus necator (strain ATCC 43291 / DSM 13513 / CCUG 52238 / LMG 8453 / N-1) (Ralstonia eutropha).